The primary structure comprises 1093 residues: Semaphorin 5c (1093 aa).

The first 34 residues, 1 to 34, serve as a signal peptide directing secretion; sequence MNMLILKLPKMFSQLWLLLILSLLTLEGPQPSTG. N-linked (GlcNAc...) asparagine glycosylation occurs at asparagine 48. Positions 50–495 constitute a Sema domain; sequence SRYISYQDLM…TDLALTRIPA (446 aa). 2 disulfide bridges follow: cysteine 118/cysteine 128 and cysteine 146/cysteine 155. N-linked (GlcNAc...) asparagine glycosylation is found at asparagine 162, asparagine 182, asparagine 285, and asparagine 295. Disulfide bonds link cysteine 271-cysteine 376 and cysteine 296-cysteine 338. The N-linked (GlcNAc...) asparagine glycan is linked to asparagine 341. The 50-residue stretch at 497 to 546 folds into the PSI domain; that stretch reads HCSRHVSQSSCLNSMDPYCGWNELVERCMPQPQDSSVLQHWHQAPQITCP. TSP type-1 domains are found at residues 553–605, 607–663, and 671–726; these read DGGW…TNCT, HGGW…PPCP, and DGGW…QSCQ. N-linked (GlcNAc...) asparagine glycosylation is present at asparagine 603. 6 disulfide bridges follow: cysteine 619/cysteine 656, cysteine 623/cysteine 662, cysteine 634/cysteine 646, cysteine 683/cysteine 720, cysteine 687/cysteine 725, and cysteine 698/cysteine 710. N-linked (GlcNAc...) asparagine glycosylation is present at asparagine 745. 3 TSP type-1 domains span residues 794 to 834, 850 to 901, and 904 to 953; these read DSAD…HACP, HGEW…VPCE, and LGWS…NECE. 3 disulfides stabilise this stretch: cysteine 862–cysteine 895, cysteine 866–cysteine 900, and cysteine 877–cysteine 885. Residues 960-980 traverse the membrane as a helical segment; that stretch reads TATLPIVIFVGLLFTVACCLA. 2 N-linked (GlcNAc...) asparagine glycosylation sites follow: asparagine 998 and asparagine 1046. A disordered region spans residues 1018 to 1056; the sequence is PTKDYYDQRPKRQSSFRMPAKTSNLGNGNGTLNRNNMHQ. Positions 1041–1053 are enriched in low complexity; the sequence is NLGNGNGTLNRNN.

The protein belongs to the semaphorin family. In terms of tissue distribution, in egg chambers, high levels of expression in the follicle cells, with little to no expression in the germ cells (at protein level). In stage 3 to 7 egg chambers, planar polarized at the basal epithelial surface (at protein level).

It is found in the apical cell membrane. The protein resides in the lateral cell membrane. Its subcellular location is the endosome. In terms of biological role, regulates the motility of migrating epithelial cells by providing guidance cues within the migratory environment and may also play a role in development of the olfactory system. May act as a positive axonal guidance cue. Function in neurons is essential for adult survival and is important for climbing behavior. Promotes collective migration of follicular epithelial cells in egg chambers, likely by acting at the leading edge of the basal epithelium cells to provide guidance cues across the cell boundary to the trailing edge of the cell ahead. The transmembrane receptor PlexA on the trailing edge of the cell ahead, appears to transduce this signal to suppress the formation of protrusions. Involved in olfactory avoidance behavior. The protein is Semaphorin 5c of Drosophila melanogaster (Fruit fly).